The chain runs to 61 residues: Small ribosomal subunit protein uS14B (61 aa).

Positions 24, 27, 40, and 43 each coordinate Zn(2+).

It belongs to the universal ribosomal protein uS14 family. Zinc-binding uS14 subfamily. As to quaternary structure, part of the 30S ribosomal subunit. Contacts proteins S3 and S10. Zn(2+) serves as cofactor.

Binds 16S rRNA, required for the assembly of 30S particles and may also be responsible for determining the conformation of the 16S rRNA at the A site. This is Small ribosomal subunit protein uS14B from Limosilactobacillus reuteri (strain DSM 20016) (Lactobacillus reuteri).